Here is a 139-residue protein sequence, read N- to C-terminus: Nuclear transcription factor Y subunit B-4 (139 aa).

A DNA-binding region spans residues 8–14 (LPIANVG). The interval 35–46 (VQECATEFISFV) is subunit association domain (SAD). Residues 90-115 (YREAERERTEHNKGSNDSGNEKETNT) show a composition bias toward basic and acidic residues. The interval 90–139 (YREAERERTEHNKGSNDSGNEKETNTRSDVQNQSTKFIRVVEKGSSSSAR) is disordered. Residues 116–125 (RSDVQNQSTK) are compositionally biased toward polar residues.

It belongs to the NFYB/HAP3 subunit family. In terms of assembly, heterotrimeric transcription factor composed of three components, NF-YA, NF-YB and NF-YC. NF-YB and NF-YC must interact and dimerize for NF-YA association and DNA binding. In terms of tissue distribution, expressed in flowers, siliques and young rosettes.

It is found in the nucleus. Component of the NF-Y/HAP transcription factor complex. The NF-Y complex stimulates the transcription of various genes by recognizing and binding to a CCAAT motif in promoters. This is Nuclear transcription factor Y subunit B-4 (NFYB4) from Arabidopsis thaliana (Mouse-ear cress).